Reading from the N-terminus, the 432-residue chain is Glutamate-1-semialdehyde 2,1-aminomutase 2 (432 aa).

Lysine 268 bears the N6-(pyridoxal phosphate)lysine mark.

It belongs to the class-III pyridoxal-phosphate-dependent aminotransferase family. HemL subfamily. In terms of assembly, homodimer. Requires pyridoxal 5'-phosphate as cofactor.

Its subcellular location is the cytoplasm. It catalyses the reaction (S)-4-amino-5-oxopentanoate = 5-aminolevulinate. It participates in porphyrin-containing compound metabolism; protoporphyrin-IX biosynthesis; 5-aminolevulinate from L-glutamyl-tRNA(Glu): step 2/2. This Listeria monocytogenes serotype 4b (strain CLIP80459) protein is Glutamate-1-semialdehyde 2,1-aminomutase 2.